A 612-amino-acid polypeptide reads, in one-letter code: Dihydroxy-acid dehydratase (612 aa).

Position 81 (Asp-81) interacts with Mg(2+). Cys-122 provides a ligand contact to [2Fe-2S] cluster. Mg(2+) is bound by residues Asp-123 and Lys-124. Lys-124 is modified (N6-carboxylysine). Cys-195 provides a ligand contact to [2Fe-2S] cluster. Glu-491 contacts Mg(2+). Ser-517 serves as the catalytic Proton acceptor.

Belongs to the IlvD/Edd family. Homodimer. Requires [2Fe-2S] cluster as cofactor. The cofactor is Mg(2+).

The enzyme catalyses (2R)-2,3-dihydroxy-3-methylbutanoate = 3-methyl-2-oxobutanoate + H2O. The catalysed reaction is (2R,3R)-2,3-dihydroxy-3-methylpentanoate = (S)-3-methyl-2-oxopentanoate + H2O. The protein operates within amino-acid biosynthesis; L-isoleucine biosynthesis; L-isoleucine from 2-oxobutanoate: step 3/4. Its pathway is amino-acid biosynthesis; L-valine biosynthesis; L-valine from pyruvate: step 3/4. In terms of biological role, functions in the biosynthesis of branched-chain amino acids. Catalyzes the dehydration of (2R,3R)-2,3-dihydroxy-3-methylpentanoate (2,3-dihydroxy-3-methylvalerate) into 2-oxo-3-methylpentanoate (2-oxo-3-methylvalerate) and of (2R)-2,3-dihydroxy-3-methylbutanoate (2,3-dihydroxyisovalerate) into 2-oxo-3-methylbutanoate (2-oxoisovalerate), the penultimate precursor to L-isoleucine and L-valine, respectively. This is Dihydroxy-acid dehydratase from Haemophilus influenzae (strain 86-028NP).